The primary structure comprises 172 residues: Large ribosomal subunit protein uL10 (172 aa).

Belongs to the universal ribosomal protein uL10 family. As to quaternary structure, part of the ribosomal stalk of the 50S ribosomal subunit. The N-terminus interacts with L11 and the large rRNA to form the base of the stalk. The C-terminus forms an elongated spine to which L12 dimers bind in a sequential fashion forming a multimeric L10(L12)X complex.

Its function is as follows. Forms part of the ribosomal stalk, playing a central role in the interaction of the ribosome with GTP-bound translation factors. The chain is Large ribosomal subunit protein uL10 from Chlorobium phaeovibrioides (strain DSM 265 / 1930) (Prosthecochloris vibrioformis (strain DSM 265)).